The primary structure comprises 78 residues: Large ribosomal subunit protein bL28 (78 aa).

The segment at 1–25 is disordered; sequence MSRVCQVTGKRPAVGNNRSHAKNAT.

It belongs to the bacterial ribosomal protein bL28 family.

The chain is Large ribosomal subunit protein bL28 from Aliivibrio fischeri (strain ATCC 700601 / ES114) (Vibrio fischeri).